A 1050-amino-acid chain; its full sequence is Ankyrin repeat domain-containing protein 27 (1050 aa).

The interval 1–372 (MALYDEDLLK…RQGSLSAKPP (372 aa)) is sufficient for GEF activity towards RAB21. A VPS9 domain is found at 233–371 (ASEDAAFNKI…IRQGSLSAKP (139 aa)). ANK repeat units lie at residues 396 to 426 (SPTD…DKDA), 462 to 491 (RGHT…VVNA), 495 to 524 (HGAT…SAEV), 528 to 560 (NGNT…RLDI), 564 to 593 (KGDT…SPEI), and 597 to 627 (LKET…RQKS). Residues 396-460 (SPTDCLFKHI…PSVVTPFSRD (65 aa)) form a sufficient for interaction with VPS29 region. The interaction with RAB38 stretch occupies residues 451–600 (PSVVTPFSRD…PEIQNRLKET (150 aa)). Residues 451–730 (PSVVTPFSRD…APAQKRLAKV (280 aa)) form an interaction with RAB32 region. The disordered stretch occupies residues 630–665 (APVQSLQRSVDSISQESSTSSFSSMSAGSRQEETKK). Residues 638–658 (SVDSISQESSTSSFSSMSAGS) show a composition bias toward low complexity. The tract at residues 658–707 (SRQEETKKDYREVEKLLRAVADGDLEMVRYLLEWTEEDLEDAEDTVSAVD) is required for interaction with VAMP7. ANK repeat units lie at residues 668–698 (REVE…DLED), 743–772 (DGSS…NAGA), 776–805 (DQAV…KPNK), 809–838 (SGNT…AINT), and 842–871 (KGNT…SVQV). The tract at residues 692–746 (TEEDLEDAEDTVSAVDPEFCHPLCQCPKCAPAQKRLAKVPASGLGVNVTSQDGSS) is sufficient for interaction with VPS29. A phosphoserine mark is found at serine 962 and serine 970. The segment at 987–1050 (PAQSGSHAAE…TPQEVSASRS (64 aa)) is disordered. Basic and acidic residues predominate over residues 994–1007 (AAEKGNSDWPERPR). Threonine 1023 is subject to Phosphothreonine. Residues 1040–1050 (STPQEVSASRS) are compositionally biased toward polar residues.

In terms of assembly, interacts with RAB21 (GDP-bound form), VPS29, KIF5A, KIF5C, GOLGA4. Interacts with RAB32 (GTP-bound form), RAB38 (GTP-bound form), VAMP7. Interacts with low affinity with RAB5. ANKRD27:RAB32 heterodimers can homodimerize to form tetramers. Can interact with RAB38 or RAB32, VPS29 and VAMP7 simultaneously. A decreased interaction with RAB32 seen in the presence of SGSM2.

It localises to the early endosome. Its subcellular location is the late endosome. The protein resides in the cytoplasmic vesicle membrane. It is found in the lysosome. The protein localises to the cell membrane. It localises to the melanosome. Functionally, may be a guanine exchange factor (GEF) for Rab21, Rab32 and Rab38 and regulate endosome dynamics. May regulate the participation of VAMP7 in membrane fusion events; in vitro inhibits VAMP7-mediated SNARE complex formation by trapping VAMP7 in a closed, fusogenically inactive conformation. Involved in peripheral melanosomal distribution of TYRP1 in melanocytes; the function, which probably is implicating vesicle-trafficking, includes cooperation with Rab32, Rab38 and VAMP7. Involved in the regulation of neurite growth; the function seems to require its GEF activity, probably towards Rab21, and VAMP7 but not Rab32/38. Proposed to be involved in Golgi sorting of VAMP7 and transport of VAMP7 vesicles to the cell surface; the function seems to implicate kinesin heavy chain isoform 5 proteins, GOLGA4, RAB21 and MACF1. Required for the colocalization of VAMP7 and Rab21, probably on TGN sites. Involved in GLUT1 endosome-to-plasma membrane trafficking; the function is dependent of association with VPS29. Regulates the proper trafficking of melanogenic enzymes TYR, TYRP1 and DCT/TYRP2 to melanosomes in melanocytes. The protein is Ankyrin repeat domain-containing protein 27 (ANKRD27) of Pongo abelii (Sumatran orangutan).